The chain runs to 213 residues: tRNA (guanine-N(7)-)-methyltransferase (213 aa).

E43, D68, N95, and N117 together coordinate S-adenosyl-L-methionine. Residues D153 and 190-193 each bind substrate; that span reads TEYE.

It belongs to the class I-like SAM-binding methyltransferase superfamily. TrmB family.

It catalyses the reaction guanosine(46) in tRNA + S-adenosyl-L-methionine = N(7)-methylguanosine(46) in tRNA + S-adenosyl-L-homocysteine. It functions in the pathway tRNA modification; N(7)-methylguanine-tRNA biosynthesis. Catalyzes the formation of N(7)-methylguanine at position 46 (m7G46) in tRNA. The sequence is that of tRNA (guanine-N(7)-)-methyltransferase from Desulfitobacterium hafniense (strain DSM 10664 / DCB-2).